The chain runs to 441 residues: MEKAGSTDFHVKKFDPVMVAPSLPSPKATVQLSVVDSLTICRGIFNTLLVFNAPDNISADPVKIIREALSKVLVYYFPLAGRLRSKEIGELEVECTGDGALFVEAMVEDTISVLRDLDDLNPSFQQLVFWHPLDTAIEDLHLVIVQVTRFTCGGIAVGVTLPHSVCDGRGAAQFVTALAEMARGEVKPSLEPIWNRELLNPEDPLHLQLNQFDSICPPPMLEELGQASFVINVDTIEYMKQCVMEECNEFCSSFEVVAALVWIARTKALQIPHTENVKLLFAMDLRKLFNPPLPNGYYGNAIGTAYAMDNVQDLLNGSLLRAIMIIKKAKADLKDNYSRSRVVTNPYSLDVNKKSDNILALSDWRRLGFYEADFGWGGPLNVSSLQRLENGLPMFSTFLYLLPAKNKSDGIKLLLSCMPPTTLKSFKIVMEAMIEKYVSKV.

Active-site proton acceptor residues include His163 and Asp373.

Belongs to the plant acyltransferase family.

The enzyme catalyses 3'-N-debenzoyltaxol + benzoyl-CoA = paclitaxel + CoA + H(+). It functions in the pathway alkaloid biosynthesis; taxol biosynthesis. Its function is as follows. Catalyzes the stereoselective coupling of the surrogate substrate N-debenzoyl-(3'RS)-2'-deoxytaxol with benzoyl-CoA to form predominantly one 3'-epimer of 2'-deoxytaxol. This enzymatic reaction constitutes the final acylation in the taxol biosynthetic pathway. This chain is 3'-N-debenzoyl-2'-deoxytaxol N-benzoyltransferase, found in Taxus canadensis (Canadian yew).